A 113-amino-acid chain; its full sequence is Protein NATD1 (113 aa).

The span at 1-16 (MAQSPAAASPGAPEQG) shows a compositional bias: low complexity. The disordered stretch occupies residues 1–20 (MAQSPAAASPGAPEQGCPIR). The region spanning 22–112 (EHDRRRRQFT…PLPQYLERLQ (91 aa)) is the N-acetyltransferase domain.

It belongs to the NATD1 family.

The sequence is that of Protein NATD1 (NATD1) from Bos taurus (Bovine).